We begin with the raw amino-acid sequence, 210 residues long: UPF0173 protein PYRAB01190 (210 aa).

This sequence belongs to the UPF0173 family.

This Pyrococcus abyssi (strain GE5 / Orsay) protein is UPF0173 protein PYRAB01190.